A 261-amino-acid polypeptide reads, in one-letter code: Cytochrome c oxidase subunit 3 (261 aa).

At 1 to 15 (MAHQAHAYHMVDPSP) the chain is on the mitochondrial matrix side. The helical transmembrane segment at 16-34 (WPLTGAVAALLMSSGLAIW) threads the bilayer. Topologically, residues 35 to 40 (FHLHSM) are mitochondrial intermembrane. A helical transmembrane segment spans residues 41–66 (TLIVLGMILLILTMIQWWRDIIREGT). The Mitochondrial matrix segment spans residues 67–72 (FQGHHT). Residues 73–105 (PPVQKGLRYGMILFITSEVFFFLGFFWAFYHSS) form a helical membrane-spanning segment. Topologically, residues 106–128 (LAPTPELGGCWPPTGLTTLDPFE) are mitochondrial intermembrane. The chain crosses the membrane as a helical span at residues 129–152 (VPLLNTAVLLASGVTVTWAHHSLM). Over 153–155 (EGE) the chain is Mitochondrial matrix. A helical membrane pass occupies residues 156–183 (RKQAIQSLALTILLGLYFTALQAMEYYE). Topologically, residues 184-190 (APFTIAD) are mitochondrial intermembrane. A helical membrane pass occupies residues 191-223 (GVYGSTFFVATGFHGLHVIIGSTFLAVCLLRQV). The Mitochondrial matrix portion of the chain corresponds to 224-232 (LFHFTSDHH). The chain crosses the membrane as a helical span at residues 233–256 (FGFEAAAWYWHFVDVVWLFLYVSI). Residues 257–261 (YWWGS) are Mitochondrial intermembrane-facing.

Belongs to the cytochrome c oxidase subunit 3 family. Component of the cytochrome c oxidase (complex IV, CIV), a multisubunit enzyme composed of 14 subunits. The complex is composed of a catalytic core of 3 subunits MT-CO1, MT-CO2 and MT-CO3, encoded in the mitochondrial DNA, and 11 supernumerary subunits COX4I, COX5A, COX5B, COX6A, COX6B, COX6C, COX7A, COX7B, COX7C, COX8 and NDUFA4, which are encoded in the nuclear genome. The complex exists as a monomer or a dimer and forms supercomplexes (SCs) in the inner mitochondrial membrane with NADH-ubiquinone oxidoreductase (complex I, CI) and ubiquinol-cytochrome c oxidoreductase (cytochrome b-c1 complex, complex III, CIII), resulting in different assemblies (supercomplex SCI(1)III(2)IV(1) and megacomplex MCI(2)III(2)IV(2)).

The protein localises to the mitochondrion inner membrane. It catalyses the reaction 4 Fe(II)-[cytochrome c] + O2 + 8 H(+)(in) = 4 Fe(III)-[cytochrome c] + 2 H2O + 4 H(+)(out). Its function is as follows. Component of the cytochrome c oxidase, the last enzyme in the mitochondrial electron transport chain which drives oxidative phosphorylation. The respiratory chain contains 3 multisubunit complexes succinate dehydrogenase (complex II, CII), ubiquinol-cytochrome c oxidoreductase (cytochrome b-c1 complex, complex III, CIII) and cytochrome c oxidase (complex IV, CIV), that cooperate to transfer electrons derived from NADH and succinate to molecular oxygen, creating an electrochemical gradient over the inner membrane that drives transmembrane transport and the ATP synthase. Cytochrome c oxidase is the component of the respiratory chain that catalyzes the reduction of oxygen to water. Electrons originating from reduced cytochrome c in the intermembrane space (IMS) are transferred via the dinuclear copper A center (CU(A)) of subunit 2 and heme A of subunit 1 to the active site in subunit 1, a binuclear center (BNC) formed by heme A3 and copper B (CU(B)). The BNC reduces molecular oxygen to 2 water molecules using 4 electrons from cytochrome c in the IMS and 4 protons from the mitochondrial matrix. The sequence is that of Cytochrome c oxidase subunit 3 (mt-co3) from Danio rerio (Zebrafish).